Here is a 674-residue protein sequence, read N- to C-terminus: tRNA 5-methylaminomethyl-2-thiouridine biosynthesis bifunctional protein MnmC (674 aa).

Residues 1 to 246 are tRNA (mnm(5)s(2)U34)-methyltransferase; sequence MFIMSSISHA…KREMIAGSLS (246 aa). The tract at residues 272–674 is FAD-dependent cmnm(5)s(2)U34 oxidoreductase; that stretch reads IGGGIASATL…RKGKALTQKV (403 aa).

This sequence in the N-terminal section; belongs to the methyltransferase superfamily. tRNA (mnm(5)s(2)U34)-methyltransferase family. In the C-terminal section; belongs to the DAO family. FAD is required as a cofactor.

It localises to the cytoplasm. It carries out the reaction 5-aminomethyl-2-thiouridine(34) in tRNA + S-adenosyl-L-methionine = 5-methylaminomethyl-2-thiouridine(34) in tRNA + S-adenosyl-L-homocysteine + H(+). Its function is as follows. Catalyzes the last two steps in the biosynthesis of 5-methylaminomethyl-2-thiouridine (mnm(5)s(2)U) at the wobble position (U34) in tRNA. Catalyzes the FAD-dependent demodification of cmnm(5)s(2)U34 to nm(5)s(2)U34, followed by the transfer of a methyl group from S-adenosyl-L-methionine to nm(5)s(2)U34, to form mnm(5)s(2)U34. This chain is tRNA 5-methylaminomethyl-2-thiouridine biosynthesis bifunctional protein MnmC, found in Vibrio cholerae serotype O1 (strain ATCC 39315 / El Tor Inaba N16961).